The chain runs to 428 residues: Histidine--tRNA ligase (428 aa).

The protein belongs to the class-II aminoacyl-tRNA synthetase family. As to quaternary structure, homodimer.

The protein localises to the cytoplasm. It catalyses the reaction tRNA(His) + L-histidine + ATP = L-histidyl-tRNA(His) + AMP + diphosphate + H(+). The protein is Histidine--tRNA ligase of Chlamydia trachomatis serovar A (strain ATCC VR-571B / DSM 19440 / HAR-13).